The following is a 327-amino-acid chain: MEANQSHNAKTNHPTCLTIAGSDCSGAAGIQADLKVMTAHQVYGMSVLTALTCQNSHGITGIYPLHPSLIQRQIDACLSDIQCRVVKIGMLPDPKSIPVISQALTKYKITDVVMDSVIISSMGNVMCETPTIPATIQHLFPHLLVYASNVMEAFILVEKTLKKSPPPLKSFPDIQNLMSIIHRLGPKFVVLRGHHVAFDKNMMITEKPDSKSWTADLIYDGKEFYIFEKPYNTTKSIHGESCSLTAAIASNLACNIPPLQAIHEALYSIEWAIQRVHKKSSDPYKSAQLFTALGHSSKFSGSLISLKSENYIPQADLTSVLLSHIPS.

Glutamine 54 contacts 4-amino-5-hydroxymethyl-2-methylpyrimidine.

The protein belongs to the ThiD family.

It localises to the cytoplasm. The protein resides in the nucleus. It carries out the reaction 4-amino-5-hydroxymethyl-2-methylpyrimidine + ATP = 4-amino-2-methyl-5-(phosphooxymethyl)pyrimidine + ADP + H(+). The catalysed reaction is 4-amino-2-methyl-5-(phosphooxymethyl)pyrimidine + ATP = 4-amino-2-methyl-5-(diphosphooxymethyl)pyrimidine + ADP. Its pathway is cofactor biosynthesis; thiamine diphosphate biosynthesis; 4-amino-2-methyl-5-diphosphomethylpyrimidine from 5-amino-1-(5-phospho-D-ribosyl)imidazole: step 2/3. The protein operates within cofactor biosynthesis; thiamine diphosphate biosynthesis; 4-amino-2-methyl-5-diphosphomethylpyrimidine from 5-amino-1-(5-phospho-D-ribosyl)imidazole: step 3/3. Its function is as follows. Catalyzes the phosphorylation of hydroxymethylpyrimidine phosphate (HMP-P) to HMP-PP, and of HMP to HMP-P. The polypeptide is Putative hydroxymethylpyrimidine/phosphomethylpyrimidine kinase C18B5.05c (Schizosaccharomyces pombe (strain 972 / ATCC 24843) (Fission yeast)).